The chain runs to 483 residues: Regulatory protein ViaA (483 aa).

Belongs to the ViaA family. Homodimer. Interacts with RavA.

The protein resides in the cytoplasm. Its function is as follows. Component of the RavA-ViaA chaperone complex, which may act on the membrane to optimize the function of some of the respiratory chains. ViaA stimulates the ATPase activity of RavA. This is Regulatory protein ViaA from Escherichia coli (strain 55989 / EAEC).